The primary structure comprises 347 residues: Uroporphyrinogen decarboxylase (347 aa).

Residues 24-28 (RQAGR), Asp74, Tyr145, Ser200, and His315 each bind substrate.

It belongs to the uroporphyrinogen decarboxylase family. Homodimer.

The protein resides in the cytoplasm. The enzyme catalyses uroporphyrinogen III + 4 H(+) = coproporphyrinogen III + 4 CO2. Its pathway is porphyrin-containing compound metabolism; protoporphyrin-IX biosynthesis; coproporphyrinogen-III from 5-aminolevulinate: step 4/4. Its function is as follows. Catalyzes the decarboxylation of four acetate groups of uroporphyrinogen-III to yield coproporphyrinogen-III. The protein is Uroporphyrinogen decarboxylase of Hydrogenobaculum sp. (strain Y04AAS1).